The sequence spans 482 residues: Putative alpha-L-fucosidase (482 aa).

The signal sequence occupies residues 1–16 (MIFLIFSILFLHLANC). 4 N-linked (GlcNAc...) asparagine glycosylation sites follow: Asn-182, Asn-343, Asn-359, and Asn-419.

This sequence belongs to the glycosyl hydrolase 29 family.

It catalyses the reaction an alpha-L-fucoside + H2O = L-fucose + an alcohol. Alpha-L-fucosidase is responsible for hydrolyzing the alpha-1,6-linked fucose joined to the reducing-end N-acetylglucosamine of the carbohydrate moieties of glycoproteins. The polypeptide is Putative alpha-L-fucosidase (Caenorhabditis elegans).